Reading from the N-terminus, the 1460-residue chain is ABC transporter C family member 5 (1460 aa).

Disordered stretches follow at residues Met-1–Glu-23 and Gly-37–Asn-68. Residues Gly-37 to Ser-55 are compositionally biased toward low complexity. Helical transmembrane passes span Phe-196–Phe-216, Leu-238–Tyr-258, Leu-320–Trp-340, Leu-425–Tyr-445, and Ile-456–Gly-476. One can recognise an ABC transmembrane type-1 1 domain in the interval Phe-196 to Gln-482. The interval Ile-537–Lys-567 is disordered. Polar residues predominate over residues Ser-551–Asn-563. An ABC transporter 1 domain is found at Asn-560 to Leu-783. Gly-593–Ser-600 provides a ligand contact to ATP. A run of 4 helical transmembrane segments spans residues Met-842 to Ile-862, Ala-922 to Val-942, Ile-1014 to Ile-1034, and Trp-1108 to Ile-1128. The ABC transmembrane type-1 2 domain occupies Phe-853–Thr-1166. Residues Ile-1210–Asp-1444 enclose the ABC transporter 2 domain. Gly-1244–Ser-1251 contributes to the ATP binding site.

It belongs to the ABC transporter superfamily. ABCC family. Conjugate transporter (TC 3.A.1.208) subfamily.

It localises to the membrane. This chain is ABC transporter C family member 5 (abcC5), found in Dictyostelium discoideum (Social amoeba).